A 200-amino-acid polypeptide reads, in one-letter code: HEWKKLIMVHHWPMTVCNEKNCEHPPDYWTIHGLWPDKSGECNRSWPFNPDEIKGLLPDMRLYWPDVLHSSPNHSVHFWRHEWEKHGTCAAQLDALNSQRKYFGKTLDLYKELALNSTLQKLGIKPSISYYQISDIKHALVGVYGVVPKVQCLPPKSGEKVQTLGQIELCLTRDLQLQDCPEPGLEICEDGPVFYPPPKE.

Residues Cys-17 and Cys-22 are joined by a disulfide bond. His-32 is an active-site residue. A disulfide bridge links Cys-42 with Cys-89. N-linked (GlcNAc...) asparagine glycosylation is found at Asn-43 and Asn-73. Active-site residues include Glu-82 and His-86. N-linked (GlcNAc...) asparagine glycosylation occurs at Asn-116. Intrachain disulfides connect Cys-152-Cys-188 and Cys-170-Cys-180.

The protein belongs to the RNase T2 family.

It is found in the secreted. Its subcellular location is the lysosome lumen. It localises to the endoplasmic reticulum lumen. The protein resides in the mitochondrion intermembrane space. It catalyses the reaction a ribonucleotidyl-ribonucleotide-RNA + H2O = a 3'-end 3'-phospho-ribonucleotide-RNA + a 5'-end dephospho-ribonucleoside-RNA + H(+). The enzyme catalyses an adenylyl-uridine-RNA = a 3'-end 2',3'-cyclophospho-AMP-RNA + a 5'-end dephospho-uridine-RNA. The catalysed reaction is a guanylyl-uridine-RNA = a 3'-end 2',3'-cyclophospho-GMP-RNA + a 5'-end dephospho-uridine-RNA. Its activity is regulated as follows. Inhibited by Zn(2+) and Cu(2+). Functionally, ribonuclease that plays an essential role in innate immune response by recognizing and degrading RNAs from microbial pathogens that are subsequently sensed by TLR8. Cleaves preferentially single-stranded RNA molecules between purine and uridine residues, which critically contributes to the supply of catabolic uridine and the generation of purine-2',3'-cyclophosphate-terminated oligoribonucleotides. In turn, RNase T2 degradation products promote the RNA-dependent activation of TLR8. In plasmacytoid dendritic cells, it cooperates with PLD3 or PLD4 5'-&gt;3' exonucleases to process RNA fragments and release 2',3'-cyclic guanosine monophosphate (2',3'-cGMP), a potent stimulatory ligand for TLR7. Also plays a key role in degradation of mitochondrial RNA and processing of non-coding RNA imported from the cytosol into mitochondria. Participates as well in degradation of mitochondrion-associated cytosolic rRNAs. The protein is Ribonuclease T2 (RNASET2) of Sus scrofa (Pig).